Here is a 470-residue protein sequence, read N- to C-terminus: ATP synthase subunit beta (470 aa).

An ATP-binding site is contributed by 155 to 162 (GGAGVGKT).

This sequence belongs to the ATPase alpha/beta chains family. F-type ATPases have 2 components, CF(1) - the catalytic core - and CF(0) - the membrane proton channel. CF(1) has five subunits: alpha(3), beta(3), gamma(1), delta(1), epsilon(1). CF(0) has three main subunits: a(1), b(2) and c(9-12). The alpha and beta chains form an alternating ring which encloses part of the gamma chain. CF(1) is attached to CF(0) by a central stalk formed by the gamma and epsilon chains, while a peripheral stalk is formed by the delta and b chains.

It is found in the cell membrane. The enzyme catalyses ATP + H2O + 4 H(+)(in) = ADP + phosphate + 5 H(+)(out). In terms of biological role, produces ATP from ADP in the presence of a proton gradient across the membrane. The catalytic sites are hosted primarily by the beta subunits. This Staphylococcus haemolyticus (strain JCSC1435) protein is ATP synthase subunit beta.